Here is a 173-residue protein sequence, read N- to C-terminus: Photosystem I assembly protein Ycf3 (173 aa).

3 TPR repeats span residues 35–68 (AFAY…EEDP), 72–105 (SYTF…NPKM), and 120–153 (GEQA…APDN).

This sequence belongs to the Ycf3 family.

The protein resides in the plastid. Its subcellular location is the cyanelle thylakoid membrane. Essential for the assembly of the photosystem I (PSI) complex. May act as a chaperone-like factor to guide the assembly of the PSI subunits. This Cyanophora paradoxa protein is Photosystem I assembly protein Ycf3.